Reading from the N-terminus, the 690-residue chain is Methionine--tRNA ligase (690 aa).

The 'HIGH' region motif lies at Pro-13–His-23. Positions 144, 147, 157, and 160 each coordinate Zn(2+). A 'KMSKS' region motif is present at residues Lys-335–Ser-339. An ATP-binding site is contributed by Lys-338. Positions Asp-584–Arg-690 constitute a tRNA-binding domain.

The protein belongs to the class-I aminoacyl-tRNA synthetase family. MetG type 1 subfamily. In terms of assembly, homodimer. Requires Zn(2+) as cofactor.

It is found in the cytoplasm. It carries out the reaction tRNA(Met) + L-methionine + ATP = L-methionyl-tRNA(Met) + AMP + diphosphate. In terms of biological role, is required not only for elongation of protein synthesis but also for the initiation of all mRNA translation through initiator tRNA(fMet) aminoacylation. The sequence is that of Methionine--tRNA ligase from Cupriavidus metallidurans (strain ATCC 43123 / DSM 2839 / NBRC 102507 / CH34) (Ralstonia metallidurans).